Reading from the N-terminus, the 177-residue chain is Endoribonuclease YbeY (177 aa).

Zn(2+) is bound by residues His-118, His-122, and His-128.

Belongs to the endoribonuclease YbeY family. Requires Zn(2+) as cofactor.

It localises to the cytoplasm. Single strand-specific metallo-endoribonuclease involved in late-stage 70S ribosome quality control and in maturation of the 3' terminus of the 16S rRNA. The sequence is that of Endoribonuclease YbeY from Mycolicibacterium paratuberculosis (strain ATCC BAA-968 / K-10) (Mycobacterium paratuberculosis).